We begin with the raw amino-acid sequence, 360 residues long: Putative beta-glucosidase 15 (360 aa).

2 stretches are compositionally biased toward basic and acidic residues: residues 1–11 and 47–67; these read MARRRMGEEGK and GRRE…ERKG. 2 disordered regions span residues 1 to 21 and 35 to 103; these read MARR…NGRQ and GWRS…RAER. The span at 75–86 shows a compositional bias: basic residues; it reads GKRRRERRRGGR. Tyr-183 lines the a beta-D-glucoside pocket. Cysteines 191 and 196 form a disulfide. A beta-D-glucoside contacts are provided by residues Glu-254, Trp-301, 308–309, and Phe-317; that span reads EW. Glu-254 serves as the catalytic Nucleophile. A glycan (N-linked (GlcNAc...) asparagine) is linked at Asn-346.

Belongs to the glycosyl hydrolase 1 family.

It carries out the reaction Hydrolysis of terminal, non-reducing beta-D-glucosyl residues with release of beta-D-glucose.. The chain is Putative beta-glucosidase 15 (BGLU15) from Oryza sativa subsp. japonica (Rice).